The following is a 377-amino-acid chain: CaM kinase-like vesicle-associated protein (377 aa).

One can recognise a Protein kinase domain in the interval 24 to 287 (YDLGQLIKTE…AADAISHEWI (264 aa)). Positions 324–377 (MKRLRAPEQTDPGTPSPSKDSDKTPSMATPAPSPANTPAEGAPSLPCPSPDTTG) are disordered. Positions 347-362 (TPSMATPAPSPANTPA) are enriched in low complexity. Residues 368 to 377 (LPCPSPDTTG) are compositionally biased toward pro residues.

It belongs to the protein kinase superfamily. CAMK Ser/Thr protein kinase family. Interacts with calmodulin, in the presence of calcium. It depends on Ca(2+) as a cofactor.

It localises to the cytoplasmic vesicle membrane. In terms of biological role, does not appear to have detectable kinase activity. The sequence is that of CaM kinase-like vesicle-associated protein (camkv) from Xenopus laevis (African clawed frog).